Consider the following 911-residue polypeptide: Protein translocase subunit SecA (911 aa).

Residues Q87, 105–109 (GEGKT), and D499 contribute to the ATP site. Residues C895, C897, C906, and H907 each coordinate Zn(2+).

It belongs to the SecA family. Monomer and homodimer. Part of the essential Sec protein translocation apparatus which comprises SecA, SecYEG and auxiliary proteins SecDF-YajC and YidC. Requires Zn(2+) as cofactor.

Its subcellular location is the cell inner membrane. The protein resides in the cytoplasm. The enzyme catalyses ATP + H2O + cellular proteinSide 1 = ADP + phosphate + cellular proteinSide 2.. Functionally, part of the Sec protein translocase complex. Interacts with the SecYEG preprotein conducting channel. Has a central role in coupling the hydrolysis of ATP to the transfer of proteins into and across the cell membrane, serving both as a receptor for the preprotein-SecB complex and as an ATP-driven molecular motor driving the stepwise translocation of polypeptide chains across the membrane. The chain is Protein translocase subunit SecA from Novosphingobium aromaticivorans (strain ATCC 700278 / DSM 12444 / CCUG 56034 / CIP 105152 / NBRC 16084 / F199).